We begin with the raw amino-acid sequence, 192 residues long: MLLTIKCAQNVIKPNCQKVANLLASSRRAGLFPTTATTATSRSLSQISVLYSPAAREAARAATGGSANLRRIHNTPTTEATATAITAKKRKMVVRLNEQERAEKLQPLLDAGWTLVEGRDAIFKQFVLKDFNQAFSFMTGVALLAEKINHHPEWFNCYNKVDVTLSTHDVGGLSSQDIRMATHLETTANLLK.

The protein belongs to the pterin-4-alpha-carbinolamine dehydratase family.

The enzyme catalyses (4aS,6R)-4a-hydroxy-L-erythro-5,6,7,8-tetrahydrobiopterin = (6R)-L-erythro-6,7-dihydrobiopterin + H2O. In Drosophila melanogaster (Fruit fly), this protein is Pterin-4-alpha-carbinolamine dehydratase (Pcd).